Reading from the N-terminus, the 324-residue chain is MSLHAFIQQANQFGEQRQPFFFLIDFEQQQPIICPLAQAAELGLFFAIRGQQNVNWQTEMPHKPFELHKFPISKAAYQRGFDLVQKELQKGNSYLLNLTYPTEINTNWRLEQVFQQTTAPYKLYYRDRFVCFSPECFVNIHHNQIYTYPMKGTIDATLPEAEKRLLDSDKERQEHYTIVDLMRNDLATVAEKVEVTRFRYVEKIQTQKGAILQTSSEIRGDLAENWQARIGTILATLLPAGSISGAPKEKTVQIIHAAEQRPRGYYTGIFGLFDGESLQSAVAIRFIEQVDEKLIFRSGGGITILSELEDEYQELIQKVYVPVG.

To the C-terminal of para-aminobenzoate synthase component I.

This is an uncharacterized protein from Pasteurella multocida (strain Pm70).